A 428-amino-acid chain; its full sequence is tRNA(Ile)-lysidine synthase (428 aa).

28–33 is a binding site for ATP; sequence SGGVDS.

Belongs to the tRNA(Ile)-lysidine synthase family.

The protein resides in the cytoplasm. The enzyme catalyses cytidine(34) in tRNA(Ile2) + L-lysine + ATP = lysidine(34) in tRNA(Ile2) + AMP + diphosphate + H(+). In terms of biological role, ligates lysine onto the cytidine present at position 34 of the AUA codon-specific tRNA(Ile) that contains the anticodon CAU, in an ATP-dependent manner. Cytidine is converted to lysidine, thus changing the amino acid specificity of the tRNA from methionine to isoleucine. This is tRNA(Ile)-lysidine synthase from Streptococcus pyogenes serotype M3 (strain ATCC BAA-595 / MGAS315).